A 190-amino-acid chain; its full sequence is MASKVDSSHEFPSQIKRCLSSSKYIQLATCFHDQPHSSLMTFTYLPAGSAAPYEVEDCIILSTGENSKKYFNISSNPRVSLLVHDWTTNRQETDPDASSLYTLLYKMNQAQFSNTSVTLNGLATVLPKNSKEEEFFREKHLNTNDKGNTKQYVEGEDMRIIKIKLESARICDQRLNNVQKWNARGDETPF.

Residues Ser62 and Lys69 each contribute to the FMN site.

This sequence belongs to the pyridoxamine 5'-phosphate oxidase family. FMN serves as cofactor.

The protein resides in the cytoplasm. It localises to the nucleus. This is Pyridoxamine 5'-phosphate oxidase C1952.08c homolog from Schizosaccharomyces pombe (strain 972 / ATCC 24843) (Fission yeast).